The following is a 103-amino-acid chain: Small ribosomal subunit protein uS14c (103 aa).

The interval 34 to 56 (KVSPLSLSEKTKMQEKLQSLPRN) is disordered.

This sequence belongs to the universal ribosomal protein uS14 family. In terms of assembly, part of the 30S ribosomal subunit.

The protein localises to the plastid. It localises to the chloroplast. Functionally, binds 16S rRNA, required for the assembly of 30S particles. The polypeptide is Small ribosomal subunit protein uS14c (Saccharum hybrid (Sugarcane)).